The chain runs to 195 residues: Imidazoleglycerol-phosphate dehydratase (195 aa).

It belongs to the imidazoleglycerol-phosphate dehydratase family.

The protein resides in the cytoplasm. The enzyme catalyses D-erythro-1-(imidazol-4-yl)glycerol 3-phosphate = 3-(imidazol-4-yl)-2-oxopropyl phosphate + H2O. It functions in the pathway amino-acid biosynthesis; L-histidine biosynthesis; L-histidine from 5-phospho-alpha-D-ribose 1-diphosphate: step 6/9. In Bordetella petrii (strain ATCC BAA-461 / DSM 12804 / CCUG 43448), this protein is Imidazoleglycerol-phosphate dehydratase.